The primary structure comprises 365 residues: Chorismate synthase (365 aa).

Arg-46 is an NADP(+) binding site. Residues Arg-123–Ser-125, Asn-241–Gly-242, Gly-281, Lys-296–Ser-300, and Arg-322 each bind FMN.

Belongs to the chorismate synthase family. As to quaternary structure, homotetramer. It depends on FMNH2 as a cofactor.

The catalysed reaction is 5-O-(1-carboxyvinyl)-3-phosphoshikimate = chorismate + phosphate. It functions in the pathway metabolic intermediate biosynthesis; chorismate biosynthesis; chorismate from D-erythrose 4-phosphate and phosphoenolpyruvate: step 7/7. Functionally, catalyzes the anti-1,4-elimination of the C-3 phosphate and the C-6 proR hydrogen from 5-enolpyruvylshikimate-3-phosphate (EPSP) to yield chorismate, which is the branch point compound that serves as the starting substrate for the three terminal pathways of aromatic amino acid biosynthesis. This reaction introduces a second double bond into the aromatic ring system. This is Chorismate synthase from Helicobacter pylori (strain ATCC 700392 / 26695) (Campylobacter pylori).